The chain runs to 433 residues: Glutamate-1-semialdehyde 2,1-aminomutase (433 aa).

Position 266 is an N6-(pyridoxal phosphate)lysine (lysine 266).

The protein belongs to the class-III pyridoxal-phosphate-dependent aminotransferase family. HemL subfamily. In terms of assembly, homodimer. The cofactor is pyridoxal 5'-phosphate.

Its subcellular location is the cytoplasm. It catalyses the reaction (S)-4-amino-5-oxopentanoate = 5-aminolevulinate. It participates in porphyrin-containing compound metabolism; protoporphyrin-IX biosynthesis; 5-aminolevulinate from L-glutamyl-tRNA(Glu): step 2/2. The chain is Glutamate-1-semialdehyde 2,1-aminomutase from Psychrobacter arcticus (strain DSM 17307 / VKM B-2377 / 273-4).